Reading from the N-terminus, the 861-residue chain is Translation initiation factor IF-2 (861 aa).

2 disordered regions span residues 1–69 and 92–273; these read MSDA…GESA and ARAR…GREK. Positions 53 to 65 are enriched in gly residues; it reads GGPGGKQGGGAKG. Residues 94-108 show a composition bias toward basic and acidic residues; the sequence is ARAEAADREAQKKQD. Positions 109 to 120 are enriched in low complexity; sequence AAAMAQRAASEQ. 2 stretches are compositionally biased toward basic and acidic residues: residues 121-155 and 163-186; these read RQLEEQRERVAREAREAEEAAQKAIEDEARLKAEA and DSGRKRDDESSRRRPPAKDEKRTP. Low complexity predominate over residues 213–223; sequence PGPAAKQQPAR. Positions 255 to 273 are enriched in basic and acidic residues; that stretch reads RAREREKQRRQDTSGGREK. The 171-residue stretch at 357–527 folds into the tr-type G domain; that stretch reads PRAPVIAVMG…ALQAELLDLK (171 aa). The G1 stretch occupies residues 366–373; that stretch reads GHVDHGKT. 366–373 is a GTP binding site; that stretch reads GHVDHGKT. The G2 stretch occupies residues 391–395; that stretch reads GITQH. The interval 413–416 is G3; sequence DTPG. GTP contacts are provided by residues 413 to 417 and 467 to 470; these read DTPGH and NKCD. The interval 467-470 is G4; sequence NKCD. Positions 503–505 are G5; the sequence is SAK.

This sequence belongs to the TRAFAC class translation factor GTPase superfamily. Classic translation factor GTPase family. IF-2 subfamily.

Its subcellular location is the cytoplasm. One of the essential components for the initiation of protein synthesis. Protects formylmethionyl-tRNA from spontaneous hydrolysis and promotes its binding to the 30S ribosomal subunits. Also involved in the hydrolysis of GTP during the formation of the 70S ribosomal complex. This is Translation initiation factor IF-2 from Maricaulis maris (strain MCS10) (Caulobacter maris).